The following is a 111-amino-acid chain: Exocrine gland-secreted peptide 22 (111 aa).

The first 24 residues, 1 to 24 (MNSVPVMLFSISILLAAMLTEGRG), serve as a signal peptide directing secretion.

It belongs to the exocrine gland-secreted peptide family. As to expression, expressed in acinar cells of the lacrimal gland from where it is secreted into tears. Not detected in a range of other tissues tested including other exocrine glands, internal organs and sensory epithelia.

Its subcellular location is the secreted. In terms of biological role, pheromone produced by juveniles which activates a small number of vomeronasal organ sensory neurons and exhibits a powerful inhibitory effect on adult male mating behavior. This chain is Exocrine gland-secreted peptide 22, found in Mus musculus (Mouse).